We begin with the raw amino-acid sequence, 266 residues long: Glutathione S-transferase AN1595 (266 aa).

The GST N-terminal domain occupies 43 to 123 (SFGKLYTYKR…HVTNEDSTTT (81 aa)). 4 residues coordinate glutathione: K93, E107, C108, and N143. Residue K93 participates in substrate binding. A GST C-terminal domain is found at 128-259 (SSLDFVQIIR…VEEGLPNAPP (132 aa)).

Belongs to the GST superfamily.

The protein operates within secondary metabolite biosynthesis; terpenoid biosynthesis. Functionally, glutathione S-transferase; part of the gene cluster that mediates the biosynthesis of the diterpene ent-pimara-8(14),15-diene (PD). Within the cluster, the HMG-CoA reductase AN1593 functions in the mevalonate pathway, which produces isoprenoid precursors. The geranylgeranyl pyrophosphate (GGPP) synthase AN1592 is needed in the formation of GGPP, the precursor for diterpenes. Lastly, the pimaradiene synthase pbcA performs the 2 cyclization steps that convert GGPP to ent-pimara-8(14),15-diene. The putative roles of the remaining cluster enzymes in ent-pimara-8(14),15-diene biosynthesis is unclear. The cytochrome P450 monooxygenase AN1598, the glutathione S-transferase AN1595, the oxidoreductases AN1596 and AN1597 probably function as decorative enzymes. It is possible that in biological conditions the compound is oxidized to ent-pimara-8(14),15-dien-19-oic acid, which is a bioactive diterpene compound predominant in many plant extracts. This chain is Glutathione S-transferase AN1595, found in Emericella nidulans (strain FGSC A4 / ATCC 38163 / CBS 112.46 / NRRL 194 / M139) (Aspergillus nidulans).